The following is a 421-amino-acid chain: ATP-dependent RNA helicase RhlB (421 aa).

A Q motif motif is present at residues 9–37; sequence QKFSDFALHPQVVEALEKKGFYNCTPIQA. The Helicase ATP-binding domain occupies 40–219; that stretch reads LPLTLAGRDV…FEQMNNAEYV (180 aa). Residue 53–60 participates in ATP binding; it reads AQTGTGKT. The DEAD box signature appears at 165–168; sequence DEAD. The 146-residue stretch at 245 to 390 folds into the Helicase C-terminal domain; sequence RLLQTLIEEE…VSKYNPEALM (146 aa). The tract at residues 396-421 is disordered; that stretch reads PLRLTRSRPGNGPRRAGAPRNRRRSG. Residues 402 to 414 show a composition bias toward low complexity; that stretch reads SRPGNGPRRAGAP.

The protein belongs to the DEAD box helicase family. RhlB subfamily. As to quaternary structure, component of the RNA degradosome, which is a multiprotein complex involved in RNA processing and mRNA degradation.

The protein resides in the cytoplasm. The enzyme catalyses ATP + H2O = ADP + phosphate + H(+). Its function is as follows. DEAD-box RNA helicase involved in RNA degradation. Has RNA-dependent ATPase activity and unwinds double-stranded RNA. The sequence is that of ATP-dependent RNA helicase RhlB from Salmonella arizonae (strain ATCC BAA-731 / CDC346-86 / RSK2980).